A 228-amino-acid chain; its full sequence is Small ribosomal subunit protein uS2c (228 aa).

This sequence belongs to the universal ribosomal protein uS2 family.

Its subcellular location is the plastid. It is found in the chloroplast. This chain is Small ribosomal subunit protein uS2c (rps2), found in Mesostigma viride (Green alga).